The following is a 275-amino-acid chain: Small ribosomal subunit protein uS3 (275 aa).

Residues 38–106 (IRRLLSSGLE…QVQLNILEVK (69 aa)) form the KH type-2 domain. The disordered stretch occupies residues 217–275 (AVPAGADRPRRERPAGSRPRRSGASGTTATGTEAGRAVGSEEPAAAESATTPEAQSTES). Positions 238-275 (SGASGTTATGTEAGRAVGSEEPAAAESATTPEAQSTES) are enriched in low complexity.

This sequence belongs to the universal ribosomal protein uS3 family. In terms of assembly, part of the 30S ribosomal subunit. Forms a tight complex with proteins S10 and S14.

Functionally, binds the lower part of the 30S subunit head. Binds mRNA in the 70S ribosome, positioning it for translation. In Mycobacterium marinum (strain ATCC BAA-535 / M), this protein is Small ribosomal subunit protein uS3.